The following is a 259-amino-acid chain: Adenylosuccinate synthetase (259 aa).

GTP contacts are provided by residues 3 to 9 (GDEGKGK) and 31 to 33 (GHT). Residue Asp-4 is the Proton acceptor of the active site. Asp-4 and Gly-31 together coordinate Mg(2+). 4–7 (DEGK) contacts IMP. The active-site Proton donor is the His-32. Positions 120, 134, 215, and 230 each coordinate IMP.

This sequence belongs to the adenylosuccinate synthetase family. Homodimer. Mg(2+) is required as a cofactor.

It is found in the cytoplasm. It catalyses the reaction IMP + L-aspartate + GTP = N(6)-(1,2-dicarboxyethyl)-AMP + GDP + phosphate + 2 H(+). The protein operates within purine metabolism; AMP biosynthesis via de novo pathway; AMP from IMP: step 1/2. In terms of biological role, plays an important role in the de novo pathway of purine nucleotide biosynthesis. Catalyzes the first committed step in the biosynthesis of AMP from IMP. This chain is Adenylosuccinate synthetase, found in Aggregatibacter actinomycetemcomitans (Actinobacillus actinomycetemcomitans).